The sequence spans 372 residues: N-methyl-L-tryptophan oxidase (372 aa).

An FAD-binding site is contributed by 4-34 (DLIIIGSGSVGAAAGYYATRAGLNVLMTDAH). C308 carries the post-translational modification S-8alpha-FAD cysteine.

It belongs to the MSOX/MTOX family. MTOX subfamily. In terms of assembly, monomer. FAD is required as a cofactor.

It carries out the reaction N(alpha)-methyl-L-tryptophan + O2 + H2O = L-tryptophan + formaldehyde + H2O2. Functionally, catalyzes the oxidative demethylation of N-methyl-L-tryptophan. In Shigella dysenteriae serotype 1 (strain Sd197), this protein is N-methyl-L-tryptophan oxidase.